A 346-amino-acid chain; its full sequence is NADH-ubiquinone oxidoreductase chain 2 (346 aa).

11 consecutive transmembrane segments (helical) span residues 1–21 (MNPH…TITI), 25–45 (HWIM…PLIS), 60–80 (FLVQ…NAWA), 96–116 (MLLT…FWFP), 124–144 (LTTA…ILLM), 149–169 (LNPT…GWMG), 178–198 (ILAF…IYNP), 200–220 (LTLL…LSLN), 242–262 (AALM…GFMP), 274–294 (EMTT…FFYL), and 325–345 (IAIL…ILAA).

The protein belongs to the complex I subunit 2 family.

Its subcellular location is the mitochondrion inner membrane. It catalyses the reaction a ubiquinone + NADH + 5 H(+)(in) = a ubiquinol + NAD(+) + 4 H(+)(out). Core subunit of the mitochondrial membrane respiratory chain NADH dehydrogenase (Complex I) that is believed to belong to the minimal assembly required for catalysis. Complex I functions in the transfer of electrons from NADH to the respiratory chain. The immediate electron acceptor for the enzyme is believed to be ubiquinone. The polypeptide is NADH-ubiquinone oxidoreductase chain 2 (MT-ND2) (Struthio camelus (Common ostrich)).